Reading from the N-terminus, the 658-residue chain is Translation factor GUF1, mitochondrial (658 aa).

A mitochondrion-targeting transit peptide spans 1-40 (MRGCLQTVRWLTSAWQRPPSYPPLSRAAPCRFFNVSIPRN). The tr-type G domain occupies 60-240 (DRFRNFCIVA…TVVEQIPAPV (181 aa)). GTP contacts are provided by residues 69-76 (AHVDHGKS), 133-137 (DTPGH), and 187-190 (NKVD).

Belongs to the TRAFAC class translation factor GTPase superfamily. Classic translation factor GTPase family. LepA subfamily.

It is found in the mitochondrion inner membrane. It catalyses the reaction GTP + H2O = GDP + phosphate + H(+). Functionally, promotes mitochondrial protein synthesis. May act as a fidelity factor of the translation reaction, by catalyzing a one-codon backward translocation of tRNAs on improperly translocated ribosomes. Binds to mitochondrial ribosomes in a GTP-dependent manner. This chain is Translation factor GUF1, mitochondrial, found in Paracoccidioides brasiliensis (strain Pb18).